The following is a 273-amino-acid chain: Ribosomal RNA small subunit methyltransferase A (273 aa).

6 residues coordinate S-adenosyl-L-methionine: Asn-18, Leu-20, Gly-45, Glu-66, Asp-91, and Asn-113.

This sequence belongs to the class I-like SAM-binding methyltransferase superfamily. rRNA adenine N(6)-methyltransferase family. RsmA subfamily.

It localises to the cytoplasm. It catalyses the reaction adenosine(1518)/adenosine(1519) in 16S rRNA + 4 S-adenosyl-L-methionine = N(6)-dimethyladenosine(1518)/N(6)-dimethyladenosine(1519) in 16S rRNA + 4 S-adenosyl-L-homocysteine + 4 H(+). Specifically dimethylates two adjacent adenosines (A1518 and A1519) in the loop of a conserved hairpin near the 3'-end of 16S rRNA in the 30S particle. May play a critical role in biogenesis of 30S subunits. The chain is Ribosomal RNA small subunit methyltransferase A from Shigella flexneri.